The primary structure comprises 313 residues: Ras-related GTP-binding protein A (313 aa).

GTP-binding residues include Ser-16, Gly-17, Gly-19, Lys-20, Thr-21, Ser-22, Thr-36, Thr-42, Gly-65, and His-127. Residues Gly-17, Gly-19, Lys-20, Thr-21, and Ser-22 each coordinate GDP. His-127 and Asp-130 together coordinate GDP. Lys-142 is covalently cross-linked (Glycyl lysine isopeptide (Lys-Gly) (interchain with G-Cter in ubiquitin)). Residues Leu-148 and Ile-164 each contribute to the GDP site. Position 164 (Ile-164) interacts with GTP. Residues Lys-220, Lys-230, and Lys-244 each participate in a glycyl lysine isopeptide (Lys-Gly) (interchain with G-Cter in ubiquitin) cross-link. Ser-309 is subject to Phosphoserine.

Belongs to the GTR/RAG GTP-binding protein family. As to quaternary structure, can occur as a homodimer or as a heterodimer with RRAGC or RRAGD in a sequence-independent manner; heterodimerization stabilizes proteins of the heterodimer. The GTP-bound form of RRAGA (in complex with the GDP-bound form of RRAGC or RRAGD) interacts with RPTOR, thereby promoting recruitment of mTORC1 to the lysosomes. The Rag heterodimer interacts with SLC38A9; the probable amino acid sensor. The Rag heterodimer interacts with the Ragulator complex. The GTP-bound form of RRAGA interacts with NOL8. Component of the lysosomal folliculin complex (LFC), composed of FLCN, FNIP1 (or FNIP2), RagA/RRAGA or RagB/RRAGB GDP-bound, RagC/RRAGC or RagD/RRAGD GTP-bound, and Ragulator. Interacts with SH3BP4; the interaction with this negative regulator is most probably direct, preferentially occurs with the inactive GDP-bound form of RRAGA and is negatively regulated by amino acids. Interacts (polyubiquitinated) with TSC2. Interacts with SESN1, SESN2 and SESN3. Interacts with PIP4P1. Interacts with GPR137B. Interacts with WDR83; this interaction regulates the spatiotemporal localization of mTORC1 to the lysosomal surface. In terms of processing, polybiquitinated via 'Lys-63'-linked polyubiquitination by RNF152 in response to amino acid starvation: polyubiquitination of the GDP-bound inactive form by RNF152 promotes RRAGA inactivation and interaction with the GATOR1 complex. This does not affect RRAGA degradation.

Its subcellular location is the cytoplasm. It is found in the nucleus. It localises to the lysosome membrane. It catalyses the reaction GTP + H2O = GDP + phosphate + H(+). The activation of GTP-binding proteins is generally mediated by a guanine exchange factor (GEF), while inactivation through hydrolysis of bound GTP is catalyzed by a GTPase activating protein (GAP). The Ragulator complex functions as a GEF and promotes the active GTP-bound form. The GATOR1 complex functions as a GAP and stimulates RRAGA GTPase activity to turn it into its inactive GDP-bound form, preventing mTORC1 recruitment and activation. In terms of biological role, guanine nucleotide-binding protein that plays a crucial role in the cellular response to amino acid availability through regulation of the mTORC1 signaling cascade. Forms heterodimeric Rag complexes with RagC/RRAGC or RagD/RRAGD and cycles between an inactive GDP-bound and an active GTP-bound form: RagA/RRAGA is in its active form when GTP-bound RagA/RRAGA forms a complex with GDP-bound RagC/RRAGC (or RagD/RRAGD) and in an inactive form when GDP-bound RagA/RRAGA heterodimerizes with GTP-bound RagC/RRAGC (or RagD/RRAGD). In its GTP-bound active form, promotes the recruitment of mTORC1 to the lysosomes and its subsequent activation by the GTPase RHEB. Involved in the RCC1/Ran-GTPase pathway. May play a direct role in a TNF-alpha signaling pathway leading to induction of cell death. In Bos taurus (Bovine), this protein is Ras-related GTP-binding protein A.